A 326-amino-acid polypeptide reads, in one-letter code: Cyclin-dependent kinase B2-1 (326 aa).

A Protein kinase domain is found at 28–318 (YEKLEKVGEG…AKKAMEHPYF (291 aa)). ATP is bound by residues 34-42 (VGEGTYGKV) and Lys-57. A Phosphothreonine modification is found at Thr-38. Residue Tyr-39 is modified to Phosphotyrosine. Asp-159 acts as the Proton acceptor in catalysis. Thr-193 is subject to Phosphothreonine.

It belongs to the protein kinase superfamily. CMGC Ser/Thr protein kinase family. CDC2/CDKX subfamily. Interacts with CYCB2-1 and CYCB2-2. Binding to CYCB2-1 or CYCB2-2 activates CDK kinase. As to expression, expressed in the dividing region of the root apex and the intercalary meristem of internodes.

It is found in the nucleus. The protein resides in the cytoplasm. It localises to the cytoskeleton. The protein localises to the spindle. Its subcellular location is the phragmoplast. The catalysed reaction is L-seryl-[protein] + ATP = O-phospho-L-seryl-[protein] + ADP + H(+). It carries out the reaction L-threonyl-[protein] + ATP = O-phospho-L-threonyl-[protein] + ADP + H(+). The enzyme catalyses [DNA-directed RNA polymerase] + ATP = phospho-[DNA-directed RNA polymerase] + ADP + H(+). Forms a complex with CYCB2-1 or CYCB2-2 that activates CDK kinase in tobacco BY2 cells during G2/M (mitosis) phases. May be involved in the regulation of the cell cycle at the G2/M transition. The chain is Cyclin-dependent kinase B2-1 (CDKB2-1) from Oryza sativa subsp. japonica (Rice).